We begin with the raw amino-acid sequence, 448 residues long: Late embryogenesis abundant protein ECP63 (448 aa).

2 stretches are compositionally biased toward basic and acidic residues: residues 282 to 326 and 334 to 354; these read TEEA…EEAG and QKTR…KDSA. 2 disordered regions span residues 282–360 and 411–448; these read TEEA…RGNE and SKPG…KGKL. The stretch at 297-331 forms a coiled coil; it reads KENMEKAGEVTRQKMEEMRLEGKELKEEAGAKAQE. A compositionally biased stretch (polar residues) spans 420–432; the sequence is LKASDQMTGQTFN. Residues 435-448 are compositionally biased toward basic and acidic residues; sequence GRMDDDARKDKGKL.

It belongs to the LEA type 4 family. As to expression, expressed in mature seeds.

Its function is as follows. May be involved in the BHLH109-mediated regulation of somatic embryogenesis. The protein is Late embryogenesis abundant protein ECP63 of Arabidopsis thaliana (Mouse-ear cress).